The primary structure comprises 858 residues: Volume-regulated anion channel subunit LRRC8D (858 aa).

Residues 1-22 (MFTLAEVASLNDIQPTYRILKP) lie on the Cytoplasmic side of the membrane. The helical transmembrane segment at 23 to 48 (WWDVFMDYLAVVMLMVAIFAGTMQLT) threads the bilayer. Residues 49-163 (KDQVVCLPVL…YHLALPWYSK (115 aa)) lie on the Extracellular side of the membrane. Cys-54 and Cys-354 are disulfide-bonded. The tract at residues 118 to 137 (AESTFPSQETKKEKRDPTGR) is disordered. Over residues 126 to 137 (ETKKEKRDPTGR) the composition is skewed to basic and acidic residues. Residues 164 to 182 (YFPYLALIHTIILMVSSNF) form a helical membrane-spanning segment. Topologically, residues 183–308 (WFKYPKTCSK…EDSDLIYKLY (126 aa)) are cytoplasmic. The disordered stretch occupies residues 221–251 (SEENKQRITGAQTLPKHVSTSSDEGSPSAST). Residues 227 to 251 (RITGAQTLPKHVSTSSDEGSPSAST) show a composition bias toward polar residues. Ser-241, Ser-242, and Ser-246 each carry phosphoserine. The helical transmembrane segment at 309–330 (VVQTLIKTAKFIFILCYTANFV) threads the bilayer. Residues 331-360 (NAISFEHVCKPKVEHLTGYEVFECTHNMAY) lie on the Extracellular side of the membrane. Residues 361-386 (MLKKLLISYISIICVYGFICLYTLFW) traverse the membrane as a helical segment. Residues 387–858 (LFRIPLKEYS…DVNVPFANGI (472 aa)) are Cytoplasmic-facing. LRR repeat units lie at residues 514-534 (NLQE…AFSF), 538-559 (HLRC…VYLL), 561-582 (NLRE…IGLE), 589-609 (HLKI…ITDV), 612-632 (HLTK…NSLK), 636-657 (NVAE…IFSL), 659-680 (NLQE…ISFQ), 684-705 (RLTC…ITHV), 707-728 (NLES…VFSL), 730-751 (KLRC…IGLL), 753-774 (NLQH…LFKC), 776-797 (KLRT…ISQL), and 799-820 (QLTQ…LGQC).

This sequence belongs to the LRRC8 family. In terms of assembly, heterohexamer; oligomerizes with other LRRC8 proteins (LRRC8A, LRRC8B, LRRC8C and/or LRRC8E) to form a heterohexamer. In vivo, the subunit composition may depend primarily on expression levels, and heterooligomeric channels containing various proportions of the different LRRC8 proteins may coexist.

The protein localises to the cell membrane. The protein resides in the endoplasmic reticulum membrane. The catalysed reaction is chloride(in) = chloride(out). The enzyme catalyses iodide(out) = iodide(in). It carries out the reaction taurine(out) = taurine(in). In terms of biological role, non-essential component of the volume-regulated anion channel (VRAC, also named VSOAC channel), an anion channel required to maintain a constant cell volume in response to extracellular or intracellular osmotic changes. The VRAC channel conducts iodide better than chloride and can also conduct organic osmolytes like taurine. Plays a redundant role in the efflux of amino acids, such as aspartate, in response to osmotic stress. Channel activity requires LRRC8A plus at least one other family member (LRRC8B, LRRC8C, LRRC8D or LRRC8E); channel characteristics depend on the precise subunit composition. Also acts as a regulator of glucose-sensing in pancreatic beta cells: VRAC currents, generated in response to hypotonicity- or glucose-induced beta cell swelling, depolarize cells, thereby causing electrical excitation, leading to increase glucose sensitivity and insulin secretion. VRAC channels containing LRRC8D inhibit transport of immunoreactive cyclic dinucleotide GMP-AMP (2'-3'-cGAMP), an immune messenger produced in response to DNA virus in the cytosol. The sequence is that of Volume-regulated anion channel subunit LRRC8D from Rattus norvegicus (Rat).